The following is a 251-amino-acid chain: Uridylate kinase (251 aa).

Position 19–22 (19–22 (KLSG)) interacts with ATP. Gly61 contacts UMP. ATP is bound by residues Gly62 and Arg66. Residues Asp81 and 142-149 (TGNPYFTT) each bind UMP. The ATP site is built by Thr169, Tyr175, and Asp178.

Belongs to the UMP kinase family. As to quaternary structure, homohexamer.

The protein resides in the cytoplasm. The catalysed reaction is UMP + ATP = UDP + ADP. It participates in pyrimidine metabolism; CTP biosynthesis via de novo pathway; UDP from UMP (UMPK route): step 1/1. Its activity is regulated as follows. Inhibited by UTP. In terms of biological role, catalyzes the reversible phosphorylation of UMP to UDP. The chain is Uridylate kinase from Anaeromyxobacter dehalogenans (strain 2CP-C).